The primary structure comprises 342 residues: MSKAYEQSGVNIHAGYEAVERMSSHVKRTMRKEVIGGLGGFGATFDLSQLNMTAPVLVSGTDGVGTKLKLAIDYGKHDSIGIDAVAMCVNDILTTGAEPLYFLDYIATNKVVPEVIEQIVKGISDACVETNTALIGGETAEMGEMYHEGEYDVAGFAVGAVEKDDYVDGSEVKEGQVVIGLASSGIHSNGYSLVRKLINESGIDLASNFDNRPFIDVFLEPTKLYVKPVLALKKEVSIKAMNHITGGGFYENIPRALPAGYAARIDTTSFPTPKIFDWLQQQGNIDTNEMYNIFNMGIGYTVIVDEKDVSRALKILAEQNVEAYQIGHIVKNESTAIELLGV.

It belongs to the AIR synthase family.

The protein localises to the cytoplasm. It catalyses the reaction 2-formamido-N(1)-(5-O-phospho-beta-D-ribosyl)acetamidine + ATP = 5-amino-1-(5-phospho-beta-D-ribosyl)imidazole + ADP + phosphate + H(+). The protein operates within purine metabolism; IMP biosynthesis via de novo pathway; 5-amino-1-(5-phospho-D-ribosyl)imidazole from N(2)-formyl-N(1)-(5-phospho-D-ribosyl)glycinamide: step 2/2. In Staphylococcus aureus (strain USA300), this protein is Phosphoribosylformylglycinamidine cyclo-ligase.